The sequence spans 707 residues: MNQYLAVTSNGMENLLAEELTKLGIENAKPVQAGVKFKATNEQIYRCCLWSRLASRFVRVLSEFTCNDDMDLYLSTSSINWVNQFHSSKRFVVDFNGTNREIRNSQYGAMKVKDGIVDCFEKKGLPRPNISKERPDIRVHVRLHKDKAILGVDMVGSGLHQRGYRPESGRAPLRETLAAAIVMRCGWDGSQPLLDPMCGSGTLLIEAAMMAANMAPGVKRKQWGFEALEDFEPELWAEIKSEANVQARRGVKKVDAKFFGFDNDPNVLKVAQDNARRAGVEELITFAQGDAATITRPAGFEAGVIVSNPPYGERLGTEPGLIALYTAFGGQLKAEFGGCKASIFSSSDELLSCLRMRADKQFKLNNGALPCHQKNYSIAERSADEVKGADTNVQIAPDFSNRLKKNIGKIGKWARKEKLDCYRIYDADLPEYNVAIDVYGDQIVIQEYAAPKNIPEEKAKRRLTDIIRATIQVTGVEANKVVLKVREKQKGLSQYQKLGQVSETLEVNEYGVKLIVNLHDYLDTGLFLDHKITRRRLGEMAQGKDFLNLFAYTGSATVHAAVGGARSTTTVDMSNTYLNWAKDNMQLNGCVGRQHRFEQADCLQWLENAKGEYDLIFIDPPTFSNSKRMETSFDVQRDHIKLMTNLKRLLRAGGAIVFSNNKRHFKMDEAGLAELGLKAQNISSQTLPLDFSRNKQIHNCWLVTHAE.

One can recognise a THUMP domain in the interval 43 to 154 (QIYRCCLWSR…KDKAILGVDM (112 aa)).

It belongs to the methyltransferase superfamily. RlmKL family.

The protein localises to the cytoplasm. The enzyme catalyses guanosine(2445) in 23S rRNA + S-adenosyl-L-methionine = N(2)-methylguanosine(2445) in 23S rRNA + S-adenosyl-L-homocysteine + H(+). It catalyses the reaction guanosine(2069) in 23S rRNA + S-adenosyl-L-methionine = N(2)-methylguanosine(2069) in 23S rRNA + S-adenosyl-L-homocysteine + H(+). In terms of biological role, specifically methylates the guanine in position 2445 (m2G2445) and the guanine in position 2069 (m7G2069) of 23S rRNA. The sequence is that of Ribosomal RNA large subunit methyltransferase K/L from Vibrio campbellii (strain ATCC BAA-1116).